A 380-amino-acid polypeptide reads, in one-letter code: RNA-binding motif protein, Y chromosome, family 9 (380 aa).

An RRM domain is found at 8 to 86; the sequence is GKIFIGGLNI…KRIKVKQARR (79 aa). Disordered stretches follow at residues 82-226 and 279-358; these read KQAR…STSR and HEAP…YSAS. A compositionally biased stretch (polar residues) spans 166 to 178; the sequence is RSATSAQTRSNTG. Basic and acidic residues-rich tracts occupy residues 180–190 and 333–351; these read RGREPHRREIS and IDRE…HSPK.

In terms of tissue distribution, testis-specific.

It is found in the nucleus. Its function is as follows. RNA-binding protein which may be involved in spermatogenesis. May be required for sperm development, possibly by participating in pre-mRNA splicing in the testis. The chain is RNA-binding motif protein, Y chromosome, family 9 from Mus musculus (Mouse).